A 310-amino-acid chain; its full sequence is Putative integrase/recombinase y4rE (310 aa).

A Core-binding (CB) domain is found at 6-83; it reads RFLGEKVERY…VLRRFYEYLA (78 aa). The Tyr recombinase domain maps to 104–301; the sequence is PPPRILSEAE…SVDLLAMAAE (198 aa). Residues R148, K173, H245, R248, and H279 contribute to the active site. Residue Y288 is the O-(3'-phospho-DNA)-tyrosine intermediate of the active site.

Belongs to the 'phage' integrase family.

This Sinorhizobium fredii (strain NBRC 101917 / NGR234) protein is Putative integrase/recombinase y4rE.